Reading from the N-terminus, the 347-residue chain is Mitochondrial genome maintenance exonuclease 1 (347 aa).

Active-site residues include Asp246, Asp259, and Lys261.

This sequence belongs to the MGME1 family.

It localises to the mitochondrion. In terms of biological role, single-stranded DNA (ssDNA) metal-dependent exonuclease involved in mitochondrial genome maintenance. Has preference for 5'-3' exonuclease activity. Necessary for maintenance of proper 7S DNA levels. Probably involved in mitochondrial DNA (mtDNA) repair. Specifically binds 5-hydroxymethylcytosine (5hmC)-containing DNA in stem cells. This is Mitochondrial genome maintenance exonuclease 1 (mgme1) from Xenopus tropicalis (Western clawed frog).